Here is a 392-residue protein sequence, read N- to C-terminus: Immunoglobulin-binding protein EibA (392 aa).

The N-terminal stretch at 1–27 (MSKKFTKAVLSAAMAGVLFGVSFDIMA) is a signal peptide. Positions 28–301 (AEQSYSALNA…IAANTRTLQQ (274 aa)) are surface exposed passenger domain. Residues 28-341 (AEQSYSALNA…GLFQPYSVGK (314 aa)) lie on the Extracellular side of the membrane. Positions 174-215 (ESANSTIVANELEAQKGKLDAQKGELEAQKKNLGELTTRTDK) form a coiled coil. Residues 187 to 230 (AQKGKLDAQKGELEAQKKNLGELTTRTDKIDAAAAATAAKVESR) form a right-handed coiled-coil (RHcc) region. A saddle domain region spans residues 231 to 256 (TLVGVSSDGTLTRAEGAKNTISVNDG). The interval 257–322 (LVALSGRTDR…INENHKEMKR (66 aa)) is left-handed coiled-coil (LHcc). The segment at 299-341 (LQQHSARLDSQQRQINENHKEMKRAAAQSAALTGLFQPYSVGK) is outer membrane translocation of the passenger domain. 4 consecutive transmembrane segments (beta stranded) span residues 342–352 (FNASAAVGGYS), 355–366 (QALAVGVGYRFN), 369–378 (TAAKAGVAFS), and 382–392 (ASWNVGVNFEF). The interval 342–392 (FNASAAVGGYSDEQALAVGVGYRFNEQTAAKAGVAFSDGDASWNVGVNFEF) is translocator domain.

The protein belongs to the autotransporter-2 (AT-2) (TC 1.B.40) family. Eib subfamily. As to quaternary structure, homotrimer; can probably form mixed heterotrimers in vivo. Will form mixed heterotrimers with EibD; these are correctly located in the outer membrane and bind IgG Fc, although less well than homotrimers. Does not form trimers with distantly related YadA from Y.enterocolitica; coexpression was lethal and one of the genes is eliminated in vivo. If the full translocator domain (299-392) is exchanged with that of YadA ('368-455'), will form heterotrimers with YadA and vice-versa. In denaturing gels runs as 2 bands of about 121 and 131 kDa; extracting the sample with 88% phenol at 70 degrees Celsius reduces part of the signal to about 45 kDa. Binds the Fc portion of IgG; binds more than 1 Fc per subunit.

It localises to the cell surface. It is found in the cell outer membrane. Binds (in a non-immune fashion) to the Fc portion of human IgG but not IgA; binding occurs on the cell surface. Confers the ability to survive exposure to human serum exposure. Binds to the Fc portion of human IgG and to whole mouse antibodies also via Fc, binds more than 1 Fc or IgG. The polypeptide is Immunoglobulin-binding protein EibA (Escherichia coli).